A 312-amino-acid chain; its full sequence is tRNA pseudouridine synthase B (312 aa).

Residue Asp-46 is the Nucleophile of the active site. Substrate-binding residues include Tyr-74, Tyr-177, and Leu-198.

Belongs to the pseudouridine synthase TruB family. Type 1 subfamily.

It carries out the reaction uridine(55) in tRNA = pseudouridine(55) in tRNA. Functionally, responsible for synthesis of pseudouridine from uracil-55 in the psi GC loop of transfer RNAs. In Buchnera aphidicola subsp. Acyrthosiphon pisum (strain APS) (Acyrthosiphon pisum symbiotic bacterium), this protein is tRNA pseudouridine synthase B.